A 352-amino-acid polypeptide reads, in one-letter code: 3-isopropylmalate dehydrogenase (352 aa).

Arginine 91, arginine 101, arginine 129, and aspartate 218 together coordinate substrate. Mg(2+) is bound by residues aspartate 218, aspartate 242, and aspartate 246. 281-293 (GSAPDIAGKGLAN) contributes to the NAD(+) binding site.

The protein belongs to the isocitrate and isopropylmalate dehydrogenases family. LeuB type 1 subfamily. In terms of assembly, homodimer. Mg(2+) is required as a cofactor. It depends on Mn(2+) as a cofactor.

Its subcellular location is the cytoplasm. It catalyses the reaction (2R,3S)-3-isopropylmalate + NAD(+) = 4-methyl-2-oxopentanoate + CO2 + NADH. The protein operates within amino-acid biosynthesis; L-leucine biosynthesis; L-leucine from 3-methyl-2-oxobutanoate: step 3/4. Catalyzes the oxidation of 3-carboxy-2-hydroxy-4-methylpentanoate (3-isopropylmalate) to 3-carboxy-4-methyl-2-oxopentanoate. The product decarboxylates to 4-methyl-2 oxopentanoate. This chain is 3-isopropylmalate dehydrogenase, found in Novosphingobium aromaticivorans (strain ATCC 700278 / DSM 12444 / CCUG 56034 / CIP 105152 / NBRC 16084 / F199).